The sequence spans 485 residues: Cysteine--tRNA ligase (485 aa).

C27 is a binding site for Zn(2+). The 'HIGH' region motif lies at I29–H39. 3 residues coordinate Zn(2+): C208, H233, and E237. Positions K265–S269 match the 'KMSKS' region motif. K268 contacts ATP.

It belongs to the class-I aminoacyl-tRNA synthetase family. In terms of assembly, monomer. Requires Zn(2+) as cofactor.

It is found in the cytoplasm. It carries out the reaction tRNA(Cys) + L-cysteine + ATP = L-cysteinyl-tRNA(Cys) + AMP + diphosphate. The chain is Cysteine--tRNA ligase from Maridesulfovibrio salexigens (strain ATCC 14822 / DSM 2638 / NCIMB 8403 / VKM B-1763) (Desulfovibrio salexigens).